Consider the following 252-residue polypeptide: MGKPLQVGVISLFPEMFSAVTDYGVTGRAIKEGLLTVSVWNPRDFTHDRHRTVDDRPYGGGPGMLMMVQPLVDAINAAKQSLGEDTPVIYLSPQGQKLDHSGVQHLSGNDRMILIAGRYEGIDERVIKQYVDAEWSIGDYVLSGGELPAMVLIDAVSRLIPGVLGHQDSAAEDSFASGLLDCPHYTRPETYNEQQVPPVLLSGDHEKIRRWRLQQSLGKTWLQRPELIHSLALTDEQETLLNEFIAQQSSGE.

S-adenosyl-L-methionine-binding positions include Gly-117 and 137-142 (IGDYVL).

This sequence belongs to the RNA methyltransferase TrmD family. Homodimer.

It localises to the cytoplasm. The enzyme catalyses guanosine(37) in tRNA + S-adenosyl-L-methionine = N(1)-methylguanosine(37) in tRNA + S-adenosyl-L-homocysteine + H(+). Its function is as follows. Specifically methylates guanosine-37 in various tRNAs. In Idiomarina loihiensis (strain ATCC BAA-735 / DSM 15497 / L2-TR), this protein is tRNA (guanine-N(1)-)-methyltransferase.